Consider the following 328-residue polypeptide: MCHQQLVISWFSLVFLASPLMAIWELKKDVYVVELDWYPDAPGEMVVLTCDTPEEDGITWTLDQSGEVLGSGKTLTIQVKEFGDAGQYTCHKGGEALSHSLLLLHKKEDGIWSTDVLKDQKEPKNKTFLRCEAKNYSGRFTCWWLTTISTDLTFSVKSSRGSSNPQGVTCGAVTLSAERVRGDNKEYEYSVECQEDSACPAAEERLPIEVMVDAIHKLKYENYTSSFFIRDIIKPDPPKNLQLKPLKNSRQVEVSWEYPDTWSTPHSYFSLTFCIQVQGKSKREKKDRIFTDKTSATVICRKNASFSVQAQDRYYSSSWSEWASVPCS.

The signal sequence occupies residues 1–22 (MCHQQLVISWFSLVFLASPLMA). Residues 29-106 (DVYVVELDWY…LSHSLLLLHK (78 aa)) form the Ig-like C2-type domain. A disulfide bond links Cys50 and Cys90. Asn125, Asn135, and Asn222 each carry an N-linked (GlcNAc...) asparagine glycan. The Fibronectin type-III domain occupies 237-328 (PPKNLQLKPL…WSEWASVPCS (92 aa)).

It belongs to the IL-12B family. In terms of assembly, heterodimer with IL12A; disulfide-linked. The heterodimer is known as interleukin IL-12. Heterodimer with IL23A; disulfide-linked. The heterodimer is known as interleukin IL-23. Also secreted as a monomer. Interacts with NBR1; this interaction promotes IL-12 secretion.

Its subcellular location is the secreted. Functionally, cytokine that can act as a growth factor for activated T and NK cells, enhance the lytic activity of NK/lymphokine-activated killer cells, and stimulate the production of IFN-gamma by resting PBMC. In terms of biological role, associates with IL23A to form the IL-23 interleukin, a heterodimeric cytokine which functions in innate and adaptive immunity. IL-23 may constitute with IL-17 an acute response to infection in peripheral tissues. IL-23 binds to a heterodimeric receptor complex composed of IL12RB1 and IL23R, activates the Jak-Stat signaling cascade, stimulates memory rather than naive T-cells and promotes production of pro-inflammatory cytokines. IL-23 induces autoimmune inflammation and thus may be responsible for autoimmune inflammatory diseases and may be important for tumorigenesis. The polypeptide is Interleukin-12 subunit beta (IL12B) (Macaca mulatta (Rhesus macaque)).